The primary structure comprises 364 residues: Mannose-1-phosphate guanyltransferase (364 aa).

This sequence belongs to the transferase hexapeptide repeat family.

Its subcellular location is the cytoplasm. The catalysed reaction is alpha-D-mannose 1-phosphate + GTP + H(+) = GDP-alpha-D-mannose + diphosphate. It functions in the pathway nucleotide-sugar biosynthesis; GDP-alpha-D-mannose biosynthesis; GDP-alpha-D-mannose from alpha-D-mannose 1-phosphate (GTP route): step 1/1. Its function is as follows. Involved in cell wall synthesis where it is required for glycosylation. Involved in cell cycle progression through cell-size checkpoint. In Cryptococcus neoformans var. neoformans serotype D (strain B-3501A) (Filobasidiella neoformans), this protein is Mannose-1-phosphate guanyltransferase (MPG1).